A 475-amino-acid chain; its full sequence is Doublecortin domain-containing protein 2 (475 aa).

2 consecutive Doublecortin domains span residues 17–100 and 139–221; these read KSVL…LNYL and CTIF…LPYS. The disordered stretch occupies residues 234 to 475; the sequence is YGQKASSLPP…EANKASSAVA (242 aa). Residues 252–272 are compositionally biased toward polar residues; the sequence is GSGNYRQSKSTIGSSDNSSPQ. Position 270 is a phosphoserine (Ser270). Residues 353 to 365 show a composition bias toward basic and acidic residues; that stretch reads EKTSKDANQKEDF. A compositionally biased stretch (acidic residues) spans 407–425; the sequence is TDEENGEELDQVAEELQPT.

Interacts with DVL1, DVL2 and DVL3. As to expression, expressed in hair cells of the inner ear.

It localises to the cell projection. The protein resides in the cilium. It is found in the cytoplasm. The protein localises to the cytoskeleton. Its subcellular location is the cilium axoneme. It localises to the kinocilium. In terms of biological role, protein that plays a role in the inhibition of canonical Wnt signaling pathway. May be involved in neuronal migration during development of the cerebral neocortex. Involved in the control of ciliogenesis and ciliary length. This chain is Doublecortin domain-containing protein 2 (Dcdc2), found in Mus musculus (Mouse).